Consider the following 280-residue polypeptide: Acetyl-coenzyme A carboxylase carboxyl transferase subunit beta (280 aa).

Residues L28–E280 enclose the CoA carboxyltransferase N-terminal domain. 4 residues coordinate Zn(2+): C32, C35, C50, and C53. Residues C32–C53 form a C4-type zinc finger.

It belongs to the AccD/PCCB family. As to quaternary structure, acetyl-CoA carboxylase is a heterohexamer composed of biotin carboxyl carrier protein (AccB), biotin carboxylase (AccC) and two subunits each of ACCase subunit alpha (AccA) and ACCase subunit beta (AccD). Zn(2+) serves as cofactor.

It localises to the cytoplasm. The catalysed reaction is N(6)-carboxybiotinyl-L-lysyl-[protein] + acetyl-CoA = N(6)-biotinyl-L-lysyl-[protein] + malonyl-CoA. It functions in the pathway lipid metabolism; malonyl-CoA biosynthesis; malonyl-CoA from acetyl-CoA: step 1/1. Its function is as follows. Component of the acetyl coenzyme A carboxylase (ACC) complex. Biotin carboxylase (BC) catalyzes the carboxylation of biotin on its carrier protein (BCCP) and then the CO(2) group is transferred by the transcarboxylase to acetyl-CoA to form malonyl-CoA. This chain is Acetyl-coenzyme A carboxylase carboxyl transferase subunit beta, found in Leuconostoc mesenteroides subsp. mesenteroides (strain ATCC 8293 / DSM 20343 / BCRC 11652 / CCM 1803 / JCM 6124 / NCDO 523 / NBRC 100496 / NCIMB 8023 / NCTC 12954 / NRRL B-1118 / 37Y).